The chain runs to 521 residues: Small ribosomal subunit protein mL104 (rPPR9) (521 aa).

Residues 1-59 (MPPSLPSLQLRRLLLRSFISSSSVNTLQSQPRIISSKPLFSPLPPSRSSIFSTFPSRFF) constitute a mitochondrion transit peptide. PPR repeat units lie at residues 174–204 (GGKT…MEND), 210–240 (DKES…TANE), 244–278 (DENI…GFEI), 279–313 (GTKA…LLEM), 321–355 (NTET…GCQP), 356–390 (DAET…GYGE), 393–427 (NKKE…GCKP), and 428–462 (GIKT…GIAV). The segment covering 480–495 (EVDSNVKKRETLPEKT) has biased composition (basic and acidic residues). A disordered region spans residues 480-499 (EVDSNVKKRETLPEKTARKK). Residues 486-503 (KKRETLPEKTARKKKRLK) carry the Nuclear localization signal motif.

Belongs to the PPR family. P subfamily. As to quaternary structure, interacts with NAP1;1 and TCP8. Able to bind mitochondrial RNA in vitro. Component of the mitochondrial ribosome small subunit. In terms of tissue distribution, expressed in root tips, lateral root primordia and leaf primordia. Highly detected in the mature pollen grains.

The protein resides in the mitochondrion matrix. It localises to the nucleus. Its function is as follows. RNA-binding protein that functions in both mitochondrion and nucleus. In mitochondrion, it is associated with polysomes and may play a role in translation. Required during embryogenesis. In nucleus, might be involved in the regulation of its own gene expression. This is Small ribosomal subunit protein mL104 (rPPR9) (PNM1) from Arabidopsis thaliana (Mouse-ear cress).